A 99-amino-acid chain; its full sequence is Indole-3-acetic acid-induced protein ARG2 (99 aa).

The tract at residues 40–62 (RGGASIGGNMVPKSGEEKVRGGE) is disordered. The segment covering 53 to 62 (SGEEKVRGGE) has biased composition (basic and acidic residues).

The chain is Indole-3-acetic acid-induced protein ARG2 (ARG2) from Vigna radiata var. radiata (Mung bean).